A 305-amino-acid polypeptide reads, in one-letter code: Ribosomal RNA small subunit methyltransferase H (305 aa).

Residues 46–48 (GGH), D65, F92, D108, and H115 each bind S-adenosyl-L-methionine.

Belongs to the methyltransferase superfamily. RsmH family.

The protein resides in the cytoplasm. The catalysed reaction is cytidine(1402) in 16S rRNA + S-adenosyl-L-methionine = N(4)-methylcytidine(1402) in 16S rRNA + S-adenosyl-L-homocysteine + H(+). In terms of biological role, specifically methylates the N4 position of cytidine in position 1402 (C1402) of 16S rRNA. The chain is Ribosomal RNA small subunit methyltransferase H from Trichormus variabilis (strain ATCC 29413 / PCC 7937) (Anabaena variabilis).